A 411-amino-acid polypeptide reads, in one-letter code: 2,3-bisphosphoglycerate-independent phosphoglycerate mutase (411 aa).

The protein belongs to the BPG-independent phosphoglycerate mutase family. A-PGAM subfamily.

The enzyme catalyses (2R)-2-phosphoglycerate = (2R)-3-phosphoglycerate. It participates in carbohydrate degradation; glycolysis; pyruvate from D-glyceraldehyde 3-phosphate: step 3/5. Catalyzes the interconversion of 2-phosphoglycerate and 3-phosphoglycerate. The sequence is that of 2,3-bisphosphoglycerate-independent phosphoglycerate mutase from Pyrobaculum islandicum (strain DSM 4184 / JCM 9189 / GEO3).